The chain runs to 421 residues: Histidine--tRNA ligase (421 aa).

This sequence belongs to the class-II aminoacyl-tRNA synthetase family. In terms of assembly, homodimer.

Its subcellular location is the cytoplasm. The catalysed reaction is tRNA(His) + L-histidine + ATP = L-histidyl-tRNA(His) + AMP + diphosphate + H(+). The protein is Histidine--tRNA ligase of Ureaplasma urealyticum serovar 10 (strain ATCC 33699 / Western).